A 193-amino-acid polypeptide reads, in one-letter code: MPHTPPAYPAASADHRPPSSPPAEPAGEAVFLHPGDWHFGDSQTRIRTLLGSCVSITLWHPQAKVGGMCHYLLAQRTPHRGESLSGRYGDEAMLLLLREILDTGLPLQEFQARLIGGASMLLSRERKLSHDVPSRNIQQARLMVKQLGLKLLAEDLGGNCPRMVLFDVASGNVWIKQSQEAELEQAPHTRTRK.

A disordered region spans residues 1–26 (MPHTPPAYPAASADHRPPSSPPAEPA).

It belongs to the CheD family.

The enzyme catalyses L-glutaminyl-[protein] + H2O = L-glutamyl-[protein] + NH4(+). Functionally, probably deamidates glutamine residues to glutamate on methyl-accepting chemotaxis receptors (MCPs), playing an important role in chemotaxis. The sequence is that of Probable chemoreceptor glutamine deamidase CheD 1 from Chromobacterium violaceum (strain ATCC 12472 / DSM 30191 / JCM 1249 / CCUG 213 / NBRC 12614 / NCIMB 9131 / NCTC 9757 / MK).